The chain runs to 173 residues: Photosystem I assembly protein Ycf3 (173 aa).

3 TPR repeats span residues 35 to 68, 72 to 105, and 120 to 153; these read AYVY…ETDP, GETL…NPKQ, and GRIA…NPGG.

It belongs to the Ycf3 family.

It is found in the cellular thylakoid membrane. Its function is as follows. Essential for the assembly of the photosystem I (PSI) complex. May act as a chaperone-like factor to guide the assembly of the PSI subunits. This is Photosystem I assembly protein Ycf3 from Synechococcus sp. (strain CC9902).